A 90-amino-acid polypeptide reads, in one-letter code: Putative membrane protein insertion efficiency factor (90 aa).

Belongs to the UPF0161 family.

The protein resides in the cell inner membrane. Functionally, could be involved in insertion of integral membrane proteins into the membrane. The polypeptide is Putative membrane protein insertion efficiency factor (Thermosynechococcus vestitus (strain NIES-2133 / IAM M-273 / BP-1)).